We begin with the raw amino-acid sequence, 425 residues long: UPF0597 protein VP2173 (425 aa).

It belongs to the UPF0597 family.

This Vibrio parahaemolyticus serotype O3:K6 (strain RIMD 2210633) protein is UPF0597 protein VP2173.